The following is a 273-amino-acid chain: 4-hydroxy-tetrahydrodipicolinate reductase (273 aa).

NAD(+)-binding positions include 12–17 (GAGGRM) and E38. R39 lines the NADP(+) pocket. Residues 102-104 (GTT) and 126-129 (AANF) contribute to the NAD(+) site. H159 serves as the catalytic Proton donor/acceptor. H160 lines the (S)-2,3,4,5-tetrahydrodipicolinate pocket. Residue K163 is the Proton donor of the active site. 169–170 (GT) serves as a coordination point for (S)-2,3,4,5-tetrahydrodipicolinate.

The protein belongs to the DapB family. As to quaternary structure, homotetramer.

It localises to the cytoplasm. It carries out the reaction (S)-2,3,4,5-tetrahydrodipicolinate + NAD(+) + H2O = (2S,4S)-4-hydroxy-2,3,4,5-tetrahydrodipicolinate + NADH + H(+). The catalysed reaction is (S)-2,3,4,5-tetrahydrodipicolinate + NADP(+) + H2O = (2S,4S)-4-hydroxy-2,3,4,5-tetrahydrodipicolinate + NADPH + H(+). It participates in amino-acid biosynthesis; L-lysine biosynthesis via DAP pathway; (S)-tetrahydrodipicolinate from L-aspartate: step 4/4. In terms of biological role, catalyzes the conversion of 4-hydroxy-tetrahydrodipicolinate (HTPA) to tetrahydrodipicolinate. The polypeptide is 4-hydroxy-tetrahydrodipicolinate reductase (Salmonella gallinarum (strain 287/91 / NCTC 13346)).